We begin with the raw amino-acid sequence, 317 residues long: U5 small nuclear ribonucleoprotein TSSC4 (317 aa).

Residues 1-19 show a composition bias toward acidic residues; that stretch reads MAETEAGLEVEEPTEDDTL. The tract at residues 1–78 is disordered; sequence MAETEAGLEV…IPTTAVQPFH (78 aa). Residues 20–37 show a composition bias toward low complexity; it reads PSDTVSLSDSDSDLSLPS. Phosphoserine occurs at positions 57, 64, 83, and 92. The hom2; mediates interaction with the U5 snRNP complexes and required for spliceosomal tri-snRNP complex assembly stretch occupies residues 74-101; the sequence is VQPFHLRGMSSTFSQRSHSIFDCLESAA. Residues 123–151 form a disordered region; that stretch reads VAPPSQTPARSLSRVHGNTDPTRVHPVPD. Positions 146–300 are interaction with SNRNP200; that stretch reads VHPVPDYVSH…SKKRSRDHFR (155 aa). Residues 147 to 183 are hom3; mediates interaction with the U5 snRNP complexes; that stretch reads HPVPDYVSHPERWTKYSLEDVSETSEQSNRDAALAFL. The tract at residues 198-238 is hom4; necessary for interaction with the PRPF19 complex and required for spliceosomal tri-snRNP complex assembly; the sequence is FNQDPSSCGEGRVVFTKPVRGSEARAERKRVLKKGVVSGAG. K214 carries the post-translational modification N6-acetyllysine. Residues 247–317 are disordered; that stretch reads HLAGPEAEEW…GPGSERGPSV (71 aa).

The protein belongs to the TSSC4 family. As to quaternary structure, interacts in a RNA-independent manner with distinct U5 snRNP-containing complexes, the mono-U5 snRNP and the post-splicing U5 snRNP-PRPF19 complex. Interacts with SNRNP200; the interaction is direct, excludes recruitment of C9ORF78 and WBP4 to SNRNP200 and negatively regulates its RNA helicase activity. Interacts with PRPF8; the interaction is direct.

The protein localises to the nucleus. The protein resides in the cytoplasm. Its function is as follows. Protein associated with the U5 snRNP, during its maturation and its post-splicing recycling and which is required for spliceosomal tri-snRNP complex assembly in the nucleus. Has a molecular sequestering activity and transiently hinders SNRNP200 binding sites for constitutive splicing factors that intervene later during the assembly of the spliceosome and splicing. Together with its molecular sequestering activity, may also function as a molecular adapter and placeholder, coordinating the assembly of the U5 snRNP and its association with the U4/U6 di-snRNP. In Rattus norvegicus (Rat), this protein is U5 small nuclear ribonucleoprotein TSSC4.